Reading from the N-terminus, the 415-residue chain is Ankyrin repeat domain-containing protein 10 (415 aa).

4 ANK repeats span residues 20-49, 56-85, 90-119, and 123-152; these read SLRF…RAHL, YGWT…SLNV, YAQT…NINK, and EGET…HTDL. Residues 303-325 are compositionally biased toward polar residues; that stretch reads TGSNGVSNGQPLSSGQASVSANG. The interval 303-330 is disordered; it reads TGSNGVSNGQPLSSGQASVSANGTEEPE.

The polypeptide is Ankyrin repeat domain-containing protein 10 (Ankrd10) (Mus musculus (Mouse)).